The sequence spans 183 residues: Peptide deformylase (183 aa).

The Fe cation site is built by cysteine 110 and histidine 153. Glutamate 154 is a catalytic residue. A Fe cation-binding site is contributed by histidine 157.

It belongs to the polypeptide deformylase family. It depends on Fe(2+) as a cofactor.

It catalyses the reaction N-terminal N-formyl-L-methionyl-[peptide] + H2O = N-terminal L-methionyl-[peptide] + formate. Functionally, removes the formyl group from the N-terminal Met of newly synthesized proteins. Requires at least a dipeptide for an efficient rate of reaction. N-terminal L-methionine is a prerequisite for activity but the enzyme has broad specificity at other positions. The chain is Peptide deformylase from Listeria monocytogenes serotype 4b (strain CLIP80459).